The chain runs to 196 residues: Adenylate kinase (196 aa).

Residue 9–17 participates in ATP binding; sequence GIPGVGKST.

It belongs to the archaeal adenylate kinase family.

It localises to the cytoplasm. It carries out the reaction AMP + ATP = 2 ADP. The polypeptide is Adenylate kinase (adkA) (Pyrococcus abyssi (strain GE5 / Orsay)).